The following is a 177-amino-acid chain: Large ribosomal subunit protein uL6 (177 aa).

The protein belongs to the universal ribosomal protein uL6 family. As to quaternary structure, part of the 50S ribosomal subunit.

This protein binds to the 23S rRNA, and is important in its secondary structure. It is located near the subunit interface in the base of the L7/L12 stalk, and near the tRNA binding site of the peptidyltransferase center. In Aliivibrio fischeri (strain MJ11) (Vibrio fischeri), this protein is Large ribosomal subunit protein uL6.